A 409-amino-acid polypeptide reads, in one-letter code: FAD-dependent monooxygenase phnB (409 aa).

4 residues coordinate FAD: Glu35, Ala50, Arg110, and Asp311.

This sequence belongs to the paxM FAD-dependent monooxygenase family. It depends on FAD as a cofactor.

It carries out the reaction 3,6,7,9-tetrahydroxy-3-methyl-2,3-dihydro-1H-naphtho[2,1-b]pyran-1-one + NADPH + O2 + H(+) = 2,3,4,7,9-pentahydroxy-6-methyl-1H-phenalen-1-one + NADP(+) + 2 H2O. It participates in secondary metabolite biosynthesis. Its function is as follows. FAD-dependent monooxygenase; part of the gene cluster that mediates the biosynthesis of phenalenones such as herqueinone, compounds that have been reported to treat tumors, bacterial infections and/or mycoses, and rheumatic diseases. The non-reducing polyketide synthase phnA synthesizes the heptaketide backbone and cyclizes it into the angular, hemiketal-containing naphtho-gamma-pyrone prephenalenone. The product template (PT) domain of phnA catalyzes only the C4-C9 aldol condensation, which is unprecedented among known PT domains. The transformation of prephenalenone to phenalenones requires an FAD-dependent monooxygenase phnB, which catalyzes the C2 aromatic hydroxylation of prephenalenone and ring opening of the gamma-pyrone ring simultaneously. Subsequent intramolecular deprotonation of C3 phenolic oxygen accelerates phenalenone ring closure to yield the tricyclic phenalenone core with a C2 hydroxylation. The prenyltransferase phnF further catalyzes reverse C-prenylation of phenalenone by direct electrophilic substitution at C6, or possibly via first a forward O-prenylation of a neighboring phenol in phenalenone, followed by a Claisen rearrangement. The hydroalkoxylation enzyme phnH catalyzes the 5-exo-trig cyclization via acid catalysis after the spontaneous deprotonation of 7-OH, which leads to the formation of the dihydrobenzofuran atrovenetin. Atrovenetin is further converted to deoxyherqueinone by the O-methyltransferase phnC which can methylate C2-OH to stabilize the northern portion of the phenalenone core. Finally, the oxidoreductase phnG converts deoxyherqueinone to herqueinone via C6 hydroxylation. In Penicillium herquei, this protein is FAD-dependent monooxygenase phnB.